The following is a 230-amino-acid chain: Orotidine 5'-phosphate decarboxylase (230 aa).

Substrate-binding positions include D11, K34, 61 to 70 (DLKLHDIPNT), T117, R179, Q188, G208, and R209. The Proton donor role is filled by K63.

Belongs to the OMP decarboxylase family. Type 1 subfamily. In terms of assembly, homodimer.

The catalysed reaction is orotidine 5'-phosphate + H(+) = UMP + CO2. It functions in the pathway pyrimidine metabolism; UMP biosynthesis via de novo pathway; UMP from orotate: step 2/2. Functionally, catalyzes the decarboxylation of orotidine 5'-monophosphate (OMP) to uridine 5'-monophosphate (UMP). In Streptococcus pyogenes serotype M28 (strain MGAS6180), this protein is Orotidine 5'-phosphate decarboxylase.